Here is a 401-residue protein sequence, read N- to C-terminus: UPF0242 protein CPn_0755/CP_1117/CPj0755/CpB0783 (401 aa).

It belongs to the UPF0242 family.

In Chlamydia pneumoniae (Chlamydophila pneumoniae), this protein is UPF0242 protein CPn_0755/CP_1117/CPj0755/CpB0783.